Reading from the N-terminus, the 198-residue chain is Probable thymidylate kinase (198 aa).

9–16 (GIDGSGKT) contacts ATP.

This sequence belongs to the thymidylate kinase family.

The enzyme catalyses dTMP + ATP = dTDP + ADP. This is Probable thymidylate kinase from Methanococcus vannielii (strain ATCC 35089 / DSM 1224 / JCM 13029 / OCM 148 / SB).